The primary structure comprises 461 residues: Probable ribonuclease FAU-1 (461 aa).

Residues 89 to 158 (GAVFYGEVTE…ARPSLATALR (70 aa)) enclose the S1 motif domain.

It belongs to the FAU-1 family.

Functionally, probable RNase involved in rRNA stability through maturation and/or degradation of precursor rRNAs. Binds to RNA in loop regions with AU-rich sequences. The chain is Probable ribonuclease FAU-1 from Natronomonas pharaonis (strain ATCC 35678 / DSM 2160 / CIP 103997 / JCM 8858 / NBRC 14720 / NCIMB 2260 / Gabara) (Halobacterium pharaonis).